Reading from the N-terminus, the 361-residue chain is Phosphoserine aminotransferase (361 aa).

Arg-43 provides a ligand contact to L-glutamate. Residues 77–78, Trp-103, Thr-153, Asp-173, and Gln-196 contribute to the pyridoxal 5'-phosphate site; that span reads AS. Residue Lys-197 is modified to N6-(pyridoxal phosphate)lysine. 238–239 is a binding site for pyridoxal 5'-phosphate; the sequence is NT.

It belongs to the class-V pyridoxal-phosphate-dependent aminotransferase family. SerC subfamily. In terms of assembly, homodimer. Pyridoxal 5'-phosphate serves as cofactor.

Its subcellular location is the cytoplasm. It carries out the reaction O-phospho-L-serine + 2-oxoglutarate = 3-phosphooxypyruvate + L-glutamate. It catalyses the reaction 4-(phosphooxy)-L-threonine + 2-oxoglutarate = (R)-3-hydroxy-2-oxo-4-phosphooxybutanoate + L-glutamate. It participates in amino-acid biosynthesis; L-serine biosynthesis; L-serine from 3-phospho-D-glycerate: step 2/3. Catalyzes the reversible conversion of 3-phosphohydroxypyruvate to phosphoserine and of 3-hydroxy-2-oxo-4-phosphonooxybutanoate to phosphohydroxythreonine. The protein is Phosphoserine aminotransferase of Bacillus anthracis (strain A0248).